A 109-amino-acid polypeptide reads, in one-letter code: Thioredoxin-like protein slr1139 (109 aa).

The 106-residue stretch at 2–107 folds into the Thioredoxin domain; that stretch reads SLLEITDAEF…LLELLKEELD (106 aa). An intrachain disulfide couples Cys31 to Cys34.

The protein belongs to the thioredoxin family.

This is Thioredoxin-like protein slr1139 from Synechocystis sp. (strain ATCC 27184 / PCC 6803 / Kazusa).